The chain runs to 119 residues: uncharacterized protein (119 aa).

This sequence to T.pallidum TP_0127, TP_0315 and TP_0619.

This is an uncharacterized protein from Treponema pallidum (strain Nichols).